We begin with the raw amino-acid sequence, 367 residues long: Glutamate 5-kinase (367 aa).

Lys10 is a binding site for ATP. The substrate site is built by Ser50, Asp137, and Asn149. ATP contacts are provided by residues 169-170 (TD) and 211-217 (TGGMGTK). Positions 275–353 (AGEITVDEGA…QQIDAILGYE (79 aa)) constitute a PUA domain.

It belongs to the glutamate 5-kinase family.

The protein resides in the cytoplasm. The enzyme catalyses L-glutamate + ATP = L-glutamyl 5-phosphate + ADP. The protein operates within amino-acid biosynthesis; L-proline biosynthesis; L-glutamate 5-semialdehyde from L-glutamate: step 1/2. In terms of biological role, catalyzes the transfer of a phosphate group to glutamate to form L-glutamate 5-phosphate. The protein is Glutamate 5-kinase of Cronobacter sakazakii (strain ATCC BAA-894) (Enterobacter sakazakii).